The chain runs to 102 residues: Small ribosomal subunit protein uS10 (102 aa).

This sequence belongs to the universal ribosomal protein uS10 family. Part of the 30S ribosomal subunit.

Functionally, involved in the binding of tRNA to the ribosomes. The chain is Small ribosomal subunit protein uS10 (rpsJ) from Bacillus subtilis (strain 168).